A 555-amino-acid polypeptide reads, in one-letter code: B3 domain-containing protein REM10 (555 aa).

4 consecutive DNA-binding regions (TF-B3) follow at residues 11–103 (NPQF…LGPS), 150–247 (CFVA…FPMT), 276–372 (SFVA…LPLN), and 460–554 (SQNR…FCSK).

It is found in the nucleus. This Arabidopsis thaliana (Mouse-ear cress) protein is B3 domain-containing protein REM10 (REM10).